A 433-amino-acid chain; its full sequence is MPDYLGADQRKTKEEEKEDKPIRSLDEGDIALLKTYGQSTYSRQIKQVEDDIQQLLKKINELTGIKESDTGLAPPALWDLAADKQTLQSEQPLQVARCTKIINADSEDPKYIINVKQFAKFVVDLSDQVAPTDIEEGMRVGVDRNKYQIHIPLPPKIDPTVTMMQVEEKPDVTYSDVGGCKEQIEKLREVVETPLLHPERFVNLGIEPPKGVLLFGPPGTGKTLCARAVANRTDACFIRVIGSELVQKYVGEGARMVRELFEMARTKKACLIFFDEIDAIGGARFDDGAGGDNEVQRTMLELINQLDGFDPRGNIKVLMATNRPDTLDPALMRPGRLDRKIEFSLPDLEGRTHIFKIHARSMSVERDIRFELLARLCPNSTGAEIRSVCTEAGMFAIRARRKVATEKDFLEAVNKVIKSYAKFSATPRYMTYN.

The disordered stretch occupies residues 1 to 23 (MPDYLGADQRKTKEEEKEDKPIR). The span at 8-23 (DQRKTKEEEKEDKPIR) shows a compositional bias: basic and acidic residues. 216–223 (GPPGTGKT) is a binding site for ATP.

It belongs to the AAA ATPase family. In terms of processing, phosphorylated. Dephosphorylated by ublcp1 which impairs psmc2 ATPase activity and disrupts 26S proteasome assembly.

The protein resides in the cytoplasm. It localises to the nucleus. Functionally, the 26S proteasome is involved in the ATP-dependent degradation of ubiquitinated proteins. The regulatory (or ATPase) complex confers ATP dependency and substrate specificity to the 26S complex. The protein is 26S proteasome regulatory subunit 7 (psmc2) of Xenopus laevis (African clawed frog).